We begin with the raw amino-acid sequence, 228 residues long: THAP domain-containing protein 2 (228 aa).

The THAP-type zinc finger occupies methionine 1–phenylalanine 80. Residues glutamate 123–tyrosine 126 carry the HCFC1-binding motif (HBM) motif.

The sequence is that of THAP domain-containing protein 2 (THAP2) from Homo sapiens (Human).